Here is a 260-residue protein sequence, read N- to C-terminus: MVLIRVLANLLILQLSYAQMSSELVTGGDECNRNEHRFLVALYDPDRFLCGGTLLNEEWVLTAAHCDRRNMWIKLGMHSKTVPNEDEQRRVPKEKFFCLSTKNYTLWDKDIMLIRLDSPVSNSEHIAPLSLPSSPPSVGSVCRIMGWGTISSNKETYPNVPHCANINILDYEVCLAAYPEFVLPATSRTLCAGILEGGKDSCKGDSGGPLICNGQFQGILSWGNDVCGYILQPALYTRVFDHLDWIQRIIAGNTDATCPP.

The N-terminal stretch at 1-18 (MVLIRVLANLLILQLSYA) is a signal peptide. A propeptide spanning residues 19 to 24 (QMSSEL) is cleaved from the precursor. Positions 25-251 (VTGGDECNRN…HLDWIQRIIA (227 aa)) constitute a Peptidase S1 domain. Intrachain disulfides connect Cys31–Cys163, Cys50–Cys66, Cys98–Cys258, Cys142–Cys212, Cys174–Cys191, and Cys202–Cys227. The active-site Charge relay system is His65. N-linked (GlcNAc...) asparagine glycosylation occurs at Asn103. Asp110 (charge relay system) is an active-site residue. The active-site Charge relay system is Ser206.

This sequence belongs to the peptidase S1 family. Snake venom subfamily. Monomer. In terms of tissue distribution, expressed by the venom gland.

The protein localises to the secreted. Snake venom serine protease that may act in the hemostasis system of the prey. In Crotalus adamanteus (Eastern diamondback rattlesnake), this protein is Snake venom serine proteinase 4a.